Here is a 341-residue protein sequence, read N- to C-terminus: CD2 antigen cytoplasmic tail-binding protein 2 (341 aa).

The tract at residues 1 to 66 (MPKRKVTFQG…DGGSSKYDIL (66 aa)) is disordered. A Glycyl lysine isopeptide (Lys-Gly) (interchain with G-Cter in SUMO2) cross-link involves residue lysine 26. Lysine 44 carries the N6-acetyllysine modification. A phosphoserine mark is found at serine 46, serine 49, and serine 118. A compositionally biased stretch (acidic residues) spans 49-58 (SDEEEDDDDG). Disordered stretches follow at residues 131 to 151 (RPPG…GQTS) and 178 to 199 (LGAR…PQRL). Residues serine 194 and serine 195 each carry the phosphoserine modification. Residues 280–338 (DVMWEYKWENTGDAELYGPFTSAQMQTWVSEGYFPDGVYCRKLDPPGGQFYNSKRIDFD) form the GYF domain.

Component of the U5 snRNP complex composed of the U5 snRNA and at least PRPF6, PRPF8, SNRNP200, EFTUD2, SNRNP40, DDX23, TXNL4A and CD2BP2. Interacts directly with TXNL4A and PRPF6. Interacts (via GYF domain) with CD2 (via Pro-rich sequence in the cytoplasmic domain). Interacts with PQBP1.

The protein resides in the cytoplasm. The protein localises to the nucleus. Functionally, involved in pre-mRNA splicing as component of the U5 snRNP complex that is involved in spliceosome assembly. This Homo sapiens (Human) protein is CD2 antigen cytoplasmic tail-binding protein 2 (CD2BP2).